The following is a 586-amino-acid chain: Kelch-like protein 7 (586 aa).

Residues 44-111 (CDVILMVQER…AYTARISVNS (68 aa)) enclose the BTB domain. Residues 146 to 248 (CLGISVLAEC…SKNFLSKTVQ (103 aa)) form the BACK domain. Kelch repeat units follow at residues 294–336 (RIAL…FWDN), 337–382 (VVYI…AAEG), 383–430 (KIYT…EANG), 431–481 (LIYV…FVKD), 483–528 (IFAV…AVGS), and 530–575 (IYVL…CVVD).

As to quaternary structure, homodimer. Component of the BCR(KLHL7) E3 ubiquitin ligase complex, at least composed of CUL3 and KLHL7 and RBX1.

It is found in the nucleus. The protein localises to the cytoplasm. Its pathway is protein modification; protein ubiquitination. Substrate-specific adapter of a BCR (BTB-CUL3-RBX1) E3 ubiquitin ligase complex. The BCR(KLHL7) complex acts by mediating ubiquitination and subsequent degradation of substrate proteins. Probably mediates 'Lys-48'-linked ubiquitination. This chain is Kelch-like protein 7 (Klhl7), found in Rattus norvegicus (Rat).